A 124-amino-acid polypeptide reads, in one-letter code: Small ribosomal subunit protein uS12 (124 aa).

Asp-89 carries the 3-methylthioaspartic acid modification.

This sequence belongs to the universal ribosomal protein uS12 family. Part of the 30S ribosomal subunit. Contacts proteins S8 and S17. May interact with IF1 in the 30S initiation complex.

Functionally, with S4 and S5 plays an important role in translational accuracy. Its function is as follows. Interacts with and stabilizes bases of the 16S rRNA that are involved in tRNA selection in the A site and with the mRNA backbone. Located at the interface of the 30S and 50S subunits, it traverses the body of the 30S subunit contacting proteins on the other side and probably holding the rRNA structure together. The combined cluster of proteins S8, S12 and S17 appears to hold together the shoulder and platform of the 30S subunit. The sequence is that of Small ribosomal subunit protein uS12 from Shewanella amazonensis (strain ATCC BAA-1098 / SB2B).